The following is a 271-amino-acid chain: Tryptophan synthase alpha chain (271 aa).

Residues Glu49 and Asp60 each act as proton acceptor in the active site.

It belongs to the TrpA family. As to quaternary structure, tetramer of two alpha and two beta chains.

The enzyme catalyses (1S,2R)-1-C-(indol-3-yl)glycerol 3-phosphate + L-serine = D-glyceraldehyde 3-phosphate + L-tryptophan + H2O. The protein operates within amino-acid biosynthesis; L-tryptophan biosynthesis; L-tryptophan from chorismate: step 5/5. Functionally, the alpha subunit is responsible for the aldol cleavage of indoleglycerol phosphate to indole and glyceraldehyde 3-phosphate. This is Tryptophan synthase alpha chain from Blochmanniella floridana.